Reading from the N-terminus, the 210-residue chain is Outer-membrane lipoprotein carrier protein (210 aa).

An N-terminal signal peptide occupies residues 1–23 (MLMFSRFRYIFFAVALLSGPVCA).

This sequence belongs to the LolA family. In terms of assembly, monomer.

It is found in the periplasm. Participates in the translocation of lipoproteins from the inner membrane to the outer membrane. Only forms a complex with a lipoprotein if the residue after the N-terminal Cys is not an aspartate (The Asp acts as a targeting signal to indicate that the lipoprotein should stay in the inner membrane). In Xylella fastidiosa (strain Temecula1 / ATCC 700964), this protein is Outer-membrane lipoprotein carrier protein.